A 104-amino-acid polypeptide reads, in one-letter code: MYAIFVDGGRQYRVEPGMELDVDYRDIAAGENLKFETVLAVGAEDGLKLGAPTLDGVSVSASVLGMSQDKKIYIQKFRRRKHSKKRTGHRQKNTRIRIEEIAGV.

This sequence belongs to the bacterial ribosomal protein bL21 family. As to quaternary structure, part of the 50S ribosomal subunit. Contacts protein L20.

Functionally, this protein binds to 23S rRNA in the presence of protein L20. In Rhodopirellula baltica (strain DSM 10527 / NCIMB 13988 / SH1), this protein is Large ribosomal subunit protein bL21.